Here is a 176-residue protein sequence, read N- to C-terminus: Tubulin polymerization-promoting protein family member 3 (176 aa).

Positions 126 to 152 are disordered; it reads TDTSKYTGSHKERFDESGKGKGKGGRE. The span at 134 to 152 shows a compositional bias: basic and acidic residues; sequence SHKERFDESGKGKGKGGRE.

The protein belongs to the TPPP family.

The protein resides in the cytoplasm. Its subcellular location is the cytoskeleton. Its function is as follows. Regulator of microtubule dynamic that has microtubule bundling activity. This Xenopus tropicalis (Western clawed frog) protein is Tubulin polymerization-promoting protein family member 3 (tppp3).